Consider the following 215-residue polypeptide: Probable transaldolase (215 aa).

Residue lysine 83 is the Schiff-base intermediate with substrate of the active site.

This sequence belongs to the transaldolase family. Type 3B subfamily.

Its subcellular location is the cytoplasm. It carries out the reaction D-sedoheptulose 7-phosphate + D-glyceraldehyde 3-phosphate = D-erythrose 4-phosphate + beta-D-fructose 6-phosphate. It participates in carbohydrate degradation; pentose phosphate pathway; D-glyceraldehyde 3-phosphate and beta-D-fructose 6-phosphate from D-ribose 5-phosphate and D-xylulose 5-phosphate (non-oxidative stage): step 2/3. Functionally, transaldolase is important for the balance of metabolites in the pentose-phosphate pathway. This chain is Probable transaldolase, found in Heliobacterium modesticaldum (strain ATCC 51547 / Ice1).